A 133-amino-acid polypeptide reads, in one-letter code: Small ribosomal subunit protein uS9 (133 aa).

Residues 95–113 (GDSKQELKSRGFLTRDPRK) show a composition bias toward basic and acidic residues. The segment at 95-133 (GDSKQELKSRGFLTRDPRKKERKKYGHKKARKSFQFSKR) is disordered. The segment covering 114-133 (KERKKYGHKKARKSFQFSKR) has biased composition (basic residues).

Belongs to the universal ribosomal protein uS9 family.

In Chlamydia felis (strain Fe/C-56) (Chlamydophila felis), this protein is Small ribosomal subunit protein uS9.